The primary structure comprises 500 residues: Glutamate--tRNA ligase (500 aa).

Residues 12–22 (PSPTGHLHIGN) carry the 'HIGH' region motif. The short motif at 259–263 (KLSKR) is the 'KMSKS' region element. ATP is bound at residue K262.

The protein belongs to the class-I aminoacyl-tRNA synthetase family. Glutamate--tRNA ligase type 1 subfamily. Monomer.

It localises to the cytoplasm. The enzyme catalyses tRNA(Glu) + L-glutamate + ATP = L-glutamyl-tRNA(Glu) + AMP + diphosphate. In terms of biological role, catalyzes the attachment of glutamate to tRNA(Glu) in a two-step reaction: glutamate is first activated by ATP to form Glu-AMP and then transferred to the acceptor end of tRNA(Glu). This chain is Glutamate--tRNA ligase, found in Lactobacillus delbrueckii subsp. bulgaricus (strain ATCC 11842 / DSM 20081 / BCRC 10696 / JCM 1002 / NBRC 13953 / NCIMB 11778 / NCTC 12712 / WDCM 00102 / Lb 14).